The chain runs to 146 residues: Flavodoxin (146 aa).

The Flavodoxin-like domain occupies 4–143 (SLIVYGSTTG…EIVSWGSGIA (140 aa)).

Belongs to the flavodoxin family. FMN serves as cofactor.

In terms of biological role, low-potential electron donor to a number of redox enzymes. The polypeptide is Flavodoxin (Maridesulfovibrio salexigens (strain ATCC 14822 / DSM 2638 / NCIMB 8403 / VKM B-1763) (Desulfovibrio salexigens)).